The chain runs to 384 residues: Helix-loop-helix protein delilah (384 aa).

Disordered regions lie at residues 1 to 101 (MKSN…TANA) and 187 to 227 (EEAE…KIVP). Basic residues predominate over residues 75-86 (KSRKNAPTKSKT). The region spanning 94–153 (YRRKTANARERTRMREINTAFETLRHCVPEAIKGEDAANTNEKLTKITTLRLAMKYITML) is the bHLH domain. Low complexity predominate over residues 209 to 224 (KKSSAASKRQSQKQAK).

Efficient DNA binding requires dimerization with another bHLH protein, possibly with da. Expressed almost exclusively in the attachments sites of the somatic muscles to tendon cells in the epidermis.

The protein resides in the nucleus. In terms of biological role, probably plays an important role in the differentiation of epidermal cells into the tendon cells that form the attachment sites for all muscles. This is Helix-loop-helix protein delilah (tx) from Drosophila melanogaster (Fruit fly).